Here is a 369-residue protein sequence, read N- to C-terminus: WAT1-related protein At3g53210 (369 aa).

A run of 10 helical transmembrane segments spans residues 12–31, 39–59, 72–92, 103–123, 133–153, 182–202, 214–234, 252–272, 278–298, and 303–323; these read IAMVVFQTGYAGNHVIMRYA, LVFPLYRTIVAFSVLAPSAYF, FLIQFFLLGLVGITLNQGFYI, ASATENVVPAVSFLMAALLGI, GIAKVVGTIVSVAGSLVITLY, WTLGCLCLMGHCLCWSSWIVL, FSFVSYSCFFAVIQFFGISAY, ALLYTGLVGSAMVFAIQIYVV, LFVSAYLPLQTLIAAVLATLA, and FYLGGLIGAILIMSGLYLVVM. EamA domains follow at residues 24-150 and 194-323; these read NHVI…SLVI and LCWS…LVVM. A disordered region spans residues 348 to 369; that stretch reads GDEEDYHNNKPRSPISQPLISS.

This sequence belongs to the drug/metabolite transporter (DMT) superfamily. Plant drug/metabolite exporter (P-DME) (TC 2.A.7.4) family.

The protein resides in the membrane. This is WAT1-related protein At3g53210 from Arabidopsis thaliana (Mouse-ear cress).